We begin with the raw amino-acid sequence, 371 residues long: L-lysine 4-hydroxylase (371 aa).

3 residues coordinate Fe cation: His174, Glu176, and His310.

This sequence belongs to the clavaminate synthase family. It depends on Fe(2+) as a cofactor.

It catalyses the reaction L-lysine + 2-oxoglutarate + O2 = (4R)-4-hydroxy-L-lysine + succinate + CO2. Its function is as follows. Alpha-ketoglutarate-dependent dioxygenase that in vitro catalyzes the regio- and stereoselective hydroxylation of L-lysine, leading to (4R)-4-hydroxy-L-lysine. The polypeptide is L-lysine 4-hydroxylase (Niastella koreensis (strain DSM 17620 / KACC 11465 / NBRC 106392 / GR20-10)).